The primary structure comprises 198 residues: Glycerol-3-phosphate acyltransferase (198 aa).

Helical transmembrane passes span 10–30, 57–77, 86–106, 118–138, and 160–180; these read LIPILFASYLIGSIPFSWILV, GISFLVLLLDIFKSVLVILIL, IMYLTGFTVVLGHIFPVWFLF, VVLSINIKIFFLFIITWAVVF, and AVTENFNSSIFYIAMSIIVLI.

Belongs to the PlsY family. In terms of assembly, probably interacts with PlsX.

Its subcellular location is the cell inner membrane. The catalysed reaction is an acyl phosphate + sn-glycerol 3-phosphate = a 1-acyl-sn-glycero-3-phosphate + phosphate. The protein operates within lipid metabolism; phospholipid metabolism. Catalyzes the transfer of an acyl group from acyl-phosphate (acyl-PO(4)) to glycerol-3-phosphate (G3P) to form lysophosphatidic acid (LPA). This enzyme utilizes acyl-phosphate as fatty acyl donor, but not acyl-CoA or acyl-ACP. In Anaplasma marginale (strain St. Maries), this protein is Glycerol-3-phosphate acyltransferase.